Consider the following 711-residue polypeptide: Polyribonucleotide nucleotidyltransferase (711 aa).

Aspartate 486 and aspartate 492 together coordinate Mg(2+). The KH domain occupies 553-612 (PRIHTIKINPDKIKDVIGKGGSVIRALTEETGTTIEIEDDGTVKIAATDGEKAKHAIRRI). The S1 motif domain occupies 622–690 (GRVYTGKVTR…RQGRIRLSIK (69 aa)). A disordered region spans residues 689-711 (IKEATEQSQPAAAPEAPAAEQGE). A compositionally biased stretch (low complexity) spans 694 to 711 (EQSQPAAAPEAPAAEQGE).

The protein belongs to the polyribonucleotide nucleotidyltransferase family. As to quaternary structure, component of the RNA degradosome, which is a multiprotein complex involved in RNA processing and mRNA degradation. Requires Mg(2+) as cofactor.

It is found in the cytoplasm. The enzyme catalyses RNA(n+1) + phosphate = RNA(n) + a ribonucleoside 5'-diphosphate. Functionally, involved in mRNA degradation. Catalyzes the phosphorolysis of single-stranded polyribonucleotides processively in the 3'- to 5'-direction. In Shigella flexneri serotype 5b (strain 8401), this protein is Polyribonucleotide nucleotidyltransferase.